A 782-amino-acid chain; its full sequence is General transcription and DNA repair factor IIH helicase/translocase subunit XPB (782 aa).

Residues 1 to 11 (MGKRDRADREK) are compositionally biased toward basic and acidic residues. The segment at 1-51 (MGKRDRADREKKKSKKRHYEDEEDEEDDAPGNDTQEAVPSAAGKQVDESGT) is disordered. The Nuclear localization signal signature appears at 6 to 18 (RADREKKKSKKRH). The segment covering 21–30 (DEEDEEDDAP) has biased composition (acidic residues). The Helicase ATP-binding domain maps to 327-488 (MFGNGRARSG…DLNFLIGPKL (162 aa)). 340–347 (LPCGAGKS) lines the ATP pocket. The DEVH box signature appears at 441 to 444 (DEVH). The 161-residue stretch at 542-702 (RACQFLIKFH…LAGMEEEDLA (161 aa)) folds into the Helicase C-terminal domain. S686 carries the post-translational modification Phosphoserine. S751 is modified (phosphoserine; by CK2).

The protein belongs to the helicase family. RAD25/XPB subfamily. As to quaternary structure, component of the 7-subunit TFIIH core complex composed of XPB/ERCC3, XPD/ERCC2, GTF2H1, GTF2H2, GTF2H3, GTF2H4 and GTF2H5, which is active in NER. The core complex associates with the 3-subunit CDK-activating kinase (CAK) module composed of CCNH/cyclin H, CDK7 and MNAT1 to form the 10-subunit holoenzyme (holo-TFIIH) active in transcription. Interacts with PUF60. Interacts with ATF7IP. Interacts with KAT2A; leading to KAT2A recruitment to promoters and acetylation of histones. Part of TBP-based Pol II pre-initiation complex (PIC), in which Pol II core assembles with general transcription factors and other specific initiation factors including GTF2E1, GTF2E2, GTF2F1, GTF2F2, TCEA1, ERCC2, ERCC3, GTF2H2, GTF2H3, GTF2H4, GTF2H5, GTF2A1, GTF2A2, GTF2B and TBP; this large multi-subunit PIC complex mediates DNA unwinding and targets Pol II core to the transcription start site where the first phosphodiester bond forms. In terms of processing, phosphorylation on Ser-751 by CK2 controls the 5'-excision activity of ERCC1-XPF endonuclease; phosphorylated protein inhibits the excision activity and thus NER. Dephosphorylation reactivates the 5'-excision step. Phosphorylation has no effect on transcription or the 3'-5' helicase activity.

The protein localises to the nucleus. The enzyme catalyses Couples ATP hydrolysis with the unwinding of duplex DNA by translocating in the 3'-5' direction.. It catalyses the reaction ATP + H2O = ADP + phosphate + H(+). With respect to regulation, phosphorylation on Ser-751 by CK2 controls the 5'-excision activity of ERCC1-XPF endonuclease; phosphorylated protein inhibits the excision activity and thus NER. ATPase activity is stimulated by TFIIH subunit p52 (GTF2H4). DNA translocase activity by this subunit in TFIIH is stimulated by XPA, ERCC5/XPG and XFP plus ERCC1. Its function is as follows. ATP-dependent 3'-5' DNA helicase/translocase; binds dsDNA rather than ssDNA, unzipping it in a translocase rather than classical helicase activity. Component of the general transcription and DNA repair factor IIH (TFIIH) core complex. When complexed to CDK-activating kinase (CAK), involved in RNA transcription by RNA polymerase II. The ATPase activity of XPB/ERCC3, but not its helicase activity, is required for DNA opening; it may wrap around the damaged DNA wedging it open, causing localized melting and twisting that allows XPD/ERCC2 helicase to anchor. The ATP-dependent helicase activity of XPB/ERCC3 may be required for promoter escape. Also involved in transcription-coupled nucleotide excision repair (NER) of damaged DNA. In NER, TFIIH acts by opening DNA around the lesion to allow the excision of the damaged oligonucleotide and its replacement by a new DNA fragment. The structure of the TFIIH transcription complex differs from the NER-TFIIH complex; large movements by XPD/ERCC2 and XPB/ERCC3 are stabilized by XPA. This Bos taurus (Bovine) protein is General transcription and DNA repair factor IIH helicase/translocase subunit XPB (ERCC3).